Here is a 354-residue protein sequence, read N- to C-terminus: Eukaryotic translation initiation factor 3 subunit H (354 aa).

The interval 1–28 (MATRQPYQKKFQSRDQREQTSSQQAPNS) is disordered. The span at 19 to 28 (QTSSQQAPNS) shows a compositional bias: polar residues. Residues 33–174 (VTVDALVVMK…LSAFRLSNKA (142 aa)) enclose the MPN domain.

The protein belongs to the eIF-3 subunit H family. Component of the eukaryotic translation initiation factor 3 (eIF-3) complex.

The protein localises to the cytoplasm. In terms of biological role, component of the eukaryotic translation initiation factor 3 (eIF-3) complex, which is involved in protein synthesis of a specialized repertoire of mRNAs and, together with other initiation factors, stimulates binding of mRNA and methionyl-tRNAi to the 40S ribosome. The eIF-3 complex specifically targets and initiates translation of a subset of mRNAs involved in cell proliferation. The sequence is that of Eukaryotic translation initiation factor 3 subunit H from Monosiga brevicollis (Choanoflagellate).